The sequence spans 513 residues: Bifunctional purine biosynthesis protein PurH (513 aa).

Residues 1-144 (MKRALISVSD…KNYQDVTVVT (144 aa)) form the MGS-like domain.

Belongs to the PurH family.

It carries out the reaction (6R)-10-formyltetrahydrofolate + 5-amino-1-(5-phospho-beta-D-ribosyl)imidazole-4-carboxamide = 5-formamido-1-(5-phospho-D-ribosyl)imidazole-4-carboxamide + (6S)-5,6,7,8-tetrahydrofolate. The catalysed reaction is IMP + H2O = 5-formamido-1-(5-phospho-D-ribosyl)imidazole-4-carboxamide. Its pathway is purine metabolism; IMP biosynthesis via de novo pathway; 5-formamido-1-(5-phospho-D-ribosyl)imidazole-4-carboxamide from 5-amino-1-(5-phospho-D-ribosyl)imidazole-4-carboxamide (10-formyl THF route): step 1/1. It functions in the pathway purine metabolism; IMP biosynthesis via de novo pathway; IMP from 5-formamido-1-(5-phospho-D-ribosyl)imidazole-4-carboxamide: step 1/1. This chain is Bifunctional purine biosynthesis protein PurH, found in Lactobacillus acidophilus (strain ATCC 700396 / NCK56 / N2 / NCFM).